Reading from the N-terminus, the 189-residue chain is Putative L,D-transpeptidase in ATP synthase subunits region ORF 5 (189 aa).

Positions 1-35 form a signal peptide, tat-type signal; it reads MTDTLNRRAAMALGLASAAGAALATPALSQDAAPA. A L,D-TPase catalytic domain is found at 59–189; it reads PMLVADTFSR…CPVGTRVRVI (131 aa). The active-site Proton donor/acceptor is the His149. The active-site Nucleophile is the Cys165.

This sequence belongs to the YkuD family. Post-translationally, predicted to be exported by the Tat system. The position of the signal peptide cleavage has not been experimentally proven.

It functions in the pathway cell wall biogenesis; peptidoglycan biosynthesis. This chain is Putative L,D-transpeptidase in ATP synthase subunits region ORF 5, found in Fuscovulum blasticum (Rhodobacter blasticus).